A 736-amino-acid chain; its full sequence is Phosphoribosylformylglycinamidine synthase subunit PurL (736 aa).

The active site involves H49. ATP contacts are provided by Y52 and K91. E93 is a Mg(2+) binding site. Residues 94 to 97 and R116 contribute to the substrate site; that span reads SHNH. The active-site Proton acceptor is H95. Position 117 (D117) interacts with Mg(2+). Q240 lines the substrate pocket. Residue D268 coordinates Mg(2+). Position 312–314 (312–314) interacts with substrate; it reads ESQ. 2 residues coordinate ATP: D493 and G530. N531 is a Mg(2+) binding site. S533 contacts substrate.

It belongs to the FGAMS family. As to quaternary structure, monomer. Part of the FGAM synthase complex composed of 1 PurL, 1 PurQ and 2 PurS subunits.

The protein resides in the cytoplasm. The catalysed reaction is N(2)-formyl-N(1)-(5-phospho-beta-D-ribosyl)glycinamide + L-glutamine + ATP + H2O = 2-formamido-N(1)-(5-O-phospho-beta-D-ribosyl)acetamidine + L-glutamate + ADP + phosphate + H(+). The protein operates within purine metabolism; IMP biosynthesis via de novo pathway; 5-amino-1-(5-phospho-D-ribosyl)imidazole from N(2)-formyl-N(1)-(5-phospho-D-ribosyl)glycinamide: step 1/2. Functionally, part of the phosphoribosylformylglycinamidine synthase complex involved in the purines biosynthetic pathway. Catalyzes the ATP-dependent conversion of formylglycinamide ribonucleotide (FGAR) and glutamine to yield formylglycinamidine ribonucleotide (FGAM) and glutamate. The FGAM synthase complex is composed of three subunits. PurQ produces an ammonia molecule by converting glutamine to glutamate. PurL transfers the ammonia molecule to FGAR to form FGAM in an ATP-dependent manner. PurS interacts with PurQ and PurL and is thought to assist in the transfer of the ammonia molecule from PurQ to PurL. This is Phosphoribosylformylglycinamidine synthase subunit PurL from Rhodopseudomonas palustris (strain BisB5).